The primary structure comprises 73 residues: Putative antitoxin VapB9 (73 aa).

Functionally, antitoxin component of a possible type II toxin-antitoxin (TA) system. The cognate toxin is VapC9. The chain is Putative antitoxin VapB9 (vapB9) from Mycobacterium tuberculosis (strain CDC 1551 / Oshkosh).